A 335-amino-acid chain; its full sequence is Trans-3-hydroxy-L-proline dehydratase (335 aa).

The active-site Proton acceptor is the cysteine 91. Substrate is bound by residues 92-93 (GH) and 256-257 (GS).

This sequence belongs to the proline racemase family. In terms of assembly, homodimer.

It carries out the reaction trans-3-hydroxy-L-proline = 1-pyrroline-2-carboxylate + H2O. The protein operates within amino-acid degradation. Its function is as follows. Catalyzes the dehydration of trans-3-hydroxy-L-proline (t3LHyp) to Delta(1)-pyrroline-2-carboxylate (Pyr2C). Together with LhpI, is involved in a t3LHyp degradation pathway to L-proline, which allows A.brasilense to grow on t3LHyp as a sole carbon source. The protein is Trans-3-hydroxy-L-proline dehydratase of Azospirillum brasilense.